A 249-amino-acid polypeptide reads, in one-letter code: tRNA pseudouridine synthase A (249 aa).

D53 functions as the Nucleophile in the catalytic mechanism. Y111 contacts substrate.

It belongs to the tRNA pseudouridine synthase TruA family. Homodimer.

The enzyme catalyses uridine(38/39/40) in tRNA = pseudouridine(38/39/40) in tRNA. In terms of biological role, formation of pseudouridine at positions 38, 39 and 40 in the anticodon stem and loop of transfer RNAs. The protein is tRNA pseudouridine synthase A of Streptococcus pneumoniae serotype 19F (strain G54).